The chain runs to 391 residues: MAKSKFERTKPHVNIGTIGHVDHGKTSLTAAITKYFGEFKAYDQIDAAPEERARGITISTAHVEYETEKRHYAHVDCPGHADYVKNMITGAAQMDGAILVVSAADGPMPQTREHILLARQVGVPAIVVFLNKVDQVDDAELLELVELEVRELLSKYDFPGDDIPIVKGSALAALEDKDKSIGEDAVRLLMSEVDNYIPTPERPVDQPFLMPIEDVFSISGRGTVVTGRVERGVIKVGEEVEIIGIRPTSKTTVTGVEMFRKLLDQGQAGDNIGALLRGIDREGIERGQVLAKPASVTPHTRFKAEAYILTKDEGGRHTPFFTNYRPQFYFRTTDVTGIVTLPEGTEMVMPGDNVAMDVSLIVPIAMEEKLRFAIREGGRTVGAGIVSKIIE.

Positions 10 to 201 (KPHVNIGTIG…EVDNYIPTPE (192 aa)) constitute a tr-type G domain. Residues 19–26 (GHVDHGKT) are G1. 19-26 (GHVDHGKT) is a GTP binding site. Residue T26 coordinates Mg(2+). Residues 55 to 59 (GITIS) form a G2 region. A G3 region spans residues 76–79 (DCPG). Residues 76–80 (DCPGH) and 131–134 (NKVD) each bind GTP. A G4 region spans residues 131-134 (NKVD). The interval 169–171 (SAL) is G5.

It belongs to the TRAFAC class translation factor GTPase superfamily. Classic translation factor GTPase family. EF-Tu/EF-1A subfamily. As to quaternary structure, monomer.

The protein localises to the cytoplasm. The catalysed reaction is GTP + H2O = GDP + phosphate + H(+). Its function is as follows. GTP hydrolase that promotes the GTP-dependent binding of aminoacyl-tRNA to the A-site of ribosomes during protein biosynthesis. The chain is Elongation factor Tu from Bartonella henselae (strain ATCC 49882 / DSM 28221 / CCUG 30454 / Houston 1) (Rochalimaea henselae).